The primary structure comprises 98 residues: NADH-ubiquinone oxidoreductase chain 4L (98 aa).

Transmembrane regions (helical) follow at residues Met-1–Ile-21, Leu-26–Val-46, and Ile-61–Ile-81.

It belongs to the complex I subunit 4L family. In terms of assembly, core subunit of respiratory chain NADH dehydrogenase (Complex I) which is composed of 45 different subunits.

It is found in the mitochondrion inner membrane. It catalyses the reaction a ubiquinone + NADH + 5 H(+)(in) = a ubiquinol + NAD(+) + 4 H(+)(out). Core subunit of the mitochondrial membrane respiratory chain NADH dehydrogenase (Complex I) which catalyzes electron transfer from NADH through the respiratory chain, using ubiquinone as an electron acceptor. Part of the enzyme membrane arm which is embedded in the lipid bilayer and involved in proton translocation. The protein is NADH-ubiquinone oxidoreductase chain 4L (MT-ND4L) of Papio hamadryas (Hamadryas baboon).